The primary structure comprises 154 residues: MHCPFCGANDTKVIDSRLVAEGEQVRRRRECLACGERFTTFETAELVLPRLIKQDGSRQPFDEEKLRAGMQRALEKRPVSVERLEAALAHIKHKLRATGEREVKSLVVGELVMGELQKLDEVAYIRFASVYRRFQDLNEFREEIDRLAREPGKE.

A zinc finger spans residues 3 to 34; that stretch reads CPFCGANDTKVIDSRLVAEGEQVRRRRECLAC. Residues 49-139 form the ATP-cone domain; it reads PRLIKQDGSR…VYRRFQDLNE (91 aa).

The protein belongs to the NrdR family. The cofactor is Zn(2+).

In terms of biological role, negatively regulates transcription of bacterial ribonucleotide reductase nrd genes and operons by binding to NrdR-boxes. The polypeptide is Transcriptional repressor NrdR (Pseudomonas syringae pv. tomato (strain ATCC BAA-871 / DC3000)).